An 887-amino-acid polypeptide reads, in one-letter code: Degenerin-like protein unc-105 (887 aa).

The interval 1-33 (MAEDRIKSKLRRPASIESTMSSRTKPRHKPSPM) is disordered. Topologically, residues 1 to 93 (MAEDRIKSKL…AATADGKWRW (93 aa)) are cytoplasmic. Residues 94–114 (FWYTAFTICLLALLIQIFFLI) form a helical membrane-spanning segment. Topologically, residues 115–698 (SKYRQYGKTV…SVLADLGGLT (584 aa)) are extracellular. 5 N-linked (GlcNAc...) asparagine glycosylation sites follow: asparagine 244, asparagine 450, asparagine 473, asparagine 581, and asparagine 599. A helical membrane pass occupies residues 699-719 (GLWIGASVVSLLEIVTLIVFA). Over 720–887 (TQAYVRKRKG…YSAPYEHRKK (168 aa)) the chain is Cytoplasmic. 2 disordered regions span residues 794-815 (AIQE…NGSC) and 859-887 (SNSE…HRKK).

The protein belongs to the amiloride-sensitive sodium channel (TC 1.A.6) family. In terms of tissue distribution, expressed in body wall muscle.

The protein localises to the membrane. Ion channel which is permeable to small monovalent cations. Shown not to be H+-ion gated. May be mechanosensitive and is required for growth and muscle development. This Caenorhabditis elegans protein is Degenerin-like protein unc-105 (unc-105).